A 122-amino-acid polypeptide reads, in one-letter code: Large ribosomal subunit protein bL12 (122 aa).

It belongs to the bacterial ribosomal protein bL12 family. Homodimer. Part of the ribosomal stalk of the 50S ribosomal subunit. Forms a multimeric L10(L12)X complex, where L10 forms an elongated spine to which 2 to 4 L12 dimers bind in a sequential fashion. Binds GTP-bound translation factors.

In terms of biological role, forms part of the ribosomal stalk which helps the ribosome interact with GTP-bound translation factors. Is thus essential for accurate translation. The sequence is that of Large ribosomal subunit protein bL12 from Fusobacterium nucleatum subsp. nucleatum (strain ATCC 25586 / DSM 15643 / BCRC 10681 / CIP 101130 / JCM 8532 / KCTC 2640 / LMG 13131 / VPI 4355).